The sequence spans 141 residues: Large ribosomal subunit protein uL16 (141 aa).

Residues 1-23 (MLMPKRTKYRKQMKGRNRGKAHR) are disordered.

It belongs to the universal ribosomal protein uL16 family. As to quaternary structure, part of the 50S ribosomal subunit.

Binds 23S rRNA and is also seen to make contacts with the A and possibly P site tRNAs. The sequence is that of Large ribosomal subunit protein uL16 from Helicobacter pylori (strain J99 / ATCC 700824) (Campylobacter pylori J99).